Reading from the N-terminus, the 450-residue chain is tRNA-2-methylthio-N(6)-dimethylallyladenosine synthase (450 aa).

The region spanning 8–128 is the MTTase N-terminal domain; that stretch reads KRLYIKTYGC…LPELIARAHR (121 aa). [4Fe-4S] cluster is bound by residues Cys17, Cys53, Cys91, Cys166, Cys170, and Cys173. In terms of domain architecture, Radical SAM core spans 152 to 382; the sequence is RPTGVTAFLT…QALLEQQQLA (231 aa). The region spanning 385 to 447 is the TRAM domain; sequence AAQAGRVLPV…RNSLAGVLEL (63 aa).

It belongs to the methylthiotransferase family. MiaB subfamily. As to quaternary structure, monomer. Requires [4Fe-4S] cluster as cofactor.

Its subcellular location is the cytoplasm. The catalysed reaction is N(6)-dimethylallyladenosine(37) in tRNA + (sulfur carrier)-SH + AH2 + 2 S-adenosyl-L-methionine = 2-methylsulfanyl-N(6)-dimethylallyladenosine(37) in tRNA + (sulfur carrier)-H + 5'-deoxyadenosine + L-methionine + A + S-adenosyl-L-homocysteine + 2 H(+). Functionally, catalyzes the methylthiolation of N6-(dimethylallyl)adenosine (i(6)A), leading to the formation of 2-methylthio-N6-(dimethylallyl)adenosine (ms(2)i(6)A) at position 37 in tRNAs that read codons beginning with uridine. In Phenylobacterium zucineum (strain HLK1), this protein is tRNA-2-methylthio-N(6)-dimethylallyladenosine synthase.